We begin with the raw amino-acid sequence, 48 residues long: Large ribosomal subunit protein bL33A (48 aa).

Belongs to the bacterial ribosomal protein bL33 family.

In Metamycoplasma arthritidis (strain 158L3-1) (Mycoplasma arthritidis), this protein is Large ribosomal subunit protein bL33A.